We begin with the raw amino-acid sequence, 153 residues long: Small ribosomal subunit protein uS11 (153 aa).

It belongs to the universal ribosomal protein uS11 family.

The polypeptide is Small ribosomal subunit protein uS11 (RPS14) (Chlamydomonas reinhardtii (Chlamydomonas smithii)).